Consider the following 424-residue polypeptide: 3-phosphoshikimate 1-carboxyvinyltransferase (424 aa).

3 residues coordinate 3-phosphoshikimate: K21, S22, and R26. Phosphoenolpyruvate is bound at residue K21. Phosphoenolpyruvate contacts are provided by G92 and R120. 3-phosphoshikimate is bound by residues S163, S164, Q165, S191, D306, and K333. Q165 is a binding site for phosphoenolpyruvate. D306 (proton acceptor) is an active-site residue. Residues R337, R379, and K405 each contribute to the phosphoenolpyruvate site.

The protein belongs to the EPSP synthase family. As to quaternary structure, monomer.

Its subcellular location is the cytoplasm. The enzyme catalyses 3-phosphoshikimate + phosphoenolpyruvate = 5-O-(1-carboxyvinyl)-3-phosphoshikimate + phosphate. Its pathway is metabolic intermediate biosynthesis; chorismate biosynthesis; chorismate from D-erythrose 4-phosphate and phosphoenolpyruvate: step 6/7. Catalyzes the transfer of the enolpyruvyl moiety of phosphoenolpyruvate (PEP) to the 5-hydroxyl of shikimate-3-phosphate (S3P) to produce enolpyruvyl shikimate-3-phosphate and inorganic phosphate. The polypeptide is 3-phosphoshikimate 1-carboxyvinyltransferase (Clostridium perfringens (strain ATCC 13124 / DSM 756 / JCM 1290 / NCIMB 6125 / NCTC 8237 / Type A)).